The chain runs to 886 residues: Valine--tRNA ligase (886 aa).

The short motif at 53–63 (PNVTGSLHMGH) is the 'HIGH' region element. The 'KMSKS' region motif lies at 540 to 544 (KMSKS). K543 contributes to the ATP binding site. Positions 819 to 851 (TIDVAAERRRLEKELAGAQKELASTAAKLANAD) form a coiled coil.

Belongs to the class-I aminoacyl-tRNA synthetase family. ValS type 1 subfamily. As to quaternary structure, monomer.

Its subcellular location is the cytoplasm. It carries out the reaction tRNA(Val) + L-valine + ATP = L-valyl-tRNA(Val) + AMP + diphosphate. Its function is as follows. Catalyzes the attachment of valine to tRNA(Val). As ValRS can inadvertently accommodate and process structurally similar amino acids such as threonine, to avoid such errors, it has a 'posttransfer' editing activity that hydrolyzes mischarged Thr-tRNA(Val) in a tRNA-dependent manner. This is Valine--tRNA ligase from Mycobacterium tuberculosis (strain CDC 1551 / Oshkosh).